We begin with the raw amino-acid sequence, 229 residues long: Uracil-DNA glycosylase (229 aa).

Aspartate 65 (proton acceptor) is an active-site residue.

This sequence belongs to the uracil-DNA glycosylase (UDG) superfamily. UNG family.

It localises to the cytoplasm. The enzyme catalyses Hydrolyzes single-stranded DNA or mismatched double-stranded DNA and polynucleotides, releasing free uracil.. Its function is as follows. Excises uracil residues from the DNA which can arise as a result of misincorporation of dUMP residues by DNA polymerase or due to deamination of cytosine. The polypeptide is Uracil-DNA glycosylase (Limosilactobacillus reuteri (strain DSM 20016) (Lactobacillus reuteri)).